Reading from the N-terminus, the 941-residue chain is ATP-dependent 6-phosphofructokinase subunit beta (941 aa).

The segment at 2–558 (PDASLFNGTS…HMKNFISTNS (557 aa)) is N-terminal catalytic PFK domain 1. ATP is bound by residues Gly-191, 255–256 (RC), and 285–288 (GDGS). Asp-286 lines the Mg(2+) pocket. Residues 331 to 333 (SID), Arg-368, 375 to 377 (MGR), Glu-432, Arg-460, and 466 to 469 (HVQR) each bind beta-D-fructose 6-phosphate. Catalysis depends on Asp-333, which acts as the Proton acceptor. An interdomain linker region spans residues 559–572 (ADHVPPSLPLEKRK). A C-terminal regulatory PFK domain 2 region spans residues 573-941 (KVAIINVGAP…SDMLSGRTSL (369 aa)). Residues Arg-643, 701–705 (TISNN), Arg-739, 746–748 (QGG), Glu-806, Lys-832, 838–841 (HVQQ), and Arg-918 each bind beta-D-fructose 2,6-bisphosphate.

It belongs to the phosphofructokinase type A (PFKA) family. ATP-dependent PFK group I subfamily. Eukaryotic two domain clade 'E' sub-subfamily. In terms of assembly, heterododecamer of 4 alpha, 4 beta and 4 gamma chains. The gamma chain bridges the N-terminal halves of the alpha and beta subunits. Mg(2+) is required as a cofactor.

The protein resides in the cytoplasm. It catalyses the reaction beta-D-fructose 6-phosphate + ATP = beta-D-fructose 1,6-bisphosphate + ADP + H(+). It participates in carbohydrate degradation; glycolysis; D-glyceraldehyde 3-phosphate and glycerone phosphate from D-glucose: step 3/4. With respect to regulation, allosterically activated by ADP, AMP, or fructose 2,6-bisphosphate, and allosterically inhibited by ATP or citrate. Catalyzes the phosphorylation of D-fructose 6-phosphate to fructose 1,6-bisphosphate by ATP, the first committing step of glycolysis. The protein is ATP-dependent 6-phosphofructokinase subunit beta (PFK2) of Komagataella phaffii (strain GS115 / ATCC 20864) (Yeast).